We begin with the raw amino-acid sequence, 2476 residues long: Non-reducing polyketide synthase pkdA (2476 aa).

Residues 22–230 (PNLNDAYLQS…VISEARLATL (209 aa)) are N-terminal acylcarrier protein transacylase domain (SAT). Catalysis depends on Cys-142, which acts as the Nucleophile; for transacylase activity. Residue His-261 is the Proton donor/acceptor; for transacylase activity of the active site. One can recognise a Ketosynthase family 3 (KS3) domain in the interval 388 to 805 (DESIAVVGMA…GSNASLVVTQ (418 aa)). Catalysis depends on for beta-ketoacyl synthase activity residues Cys-554, His-689, and His-728. The segment at 919-1204 (FGGQRSSFVG…GSGVTNLASR (286 aa)) is malonyl-CoA:ACP transacylase (MAT). The segment at 1290 to 1417 (QKGLWTFVGY…GRITFQTPKQ (128 aa)) is N-terminal hotdog fold. A PKS/mFAS DH domain is found at 1290 to 1592 (QKGLWTFVGY…FVEVSIAGMS (303 aa)). Residues 1321–1590 (YVSAHVIAQT…LHFVEVSIAG (270 aa)) form a product template (PT) domain region. His-1325 serves as the catalytic Proton acceptor; for dehydratase activity. The interval 1445-1592 (QTIQGSRNIY…FVEVSIAGMS (148 aa)) is C-terminal hotdog fold. Asp-1501 functions as the Proton donor; for dehydratase activity in the catalytic mechanism. The disordered stretch occupies residues 1626–1649 (DVSKNEKDAKAPSKKKESTSKSPG). One can recognise a Carrier domain in the interval 1650 to 1724 (HDILARVRTL…SLVKCIGANM (75 aa)). Ser-1684 is modified (O-(pantetheine 4'-phosphoryl)serine). Residues 1727-1766 (SDTSRTGDDSSDDLETASAESETSSGINNEDSHNIDRQQI) are disordered. Low complexity predominate over residues 1742–1751 (TASAESETSS). The interval 1881–2030 (ELLRQYPEHA…DCEKTPSSHL (150 aa)) is methyltransferase (CMeT) domain. Residues 2094 to 2340 (VTGATGSLGS…SWCPVDDVAA (247 aa)) form an NADPH-binding domain region.

It depends on pantetheine 4'-phosphate as a cofactor.

The catalysed reaction is propanoyl-CoA + 3 malonyl-CoA + AH2 + 2 S-adenosyl-L-methionine + H(+) = 2-ethyl-4,6-dihydroxy-3,5-dimethylbenzaldehyde + A + 2 S-adenosyl-L-homocysteine + 3 CO2 + 4 CoA + H2O. It participates in secondary metabolite biosynthesis. Its function is as follows. Non-reducing polyketide synthase that synthesizes 6-ethyl-2,4-dihydroxy-3,5-dimethylbenzaldehyde via condensation of one propanoyl-CoA starter unit with 3 malonyl-CoA units, as well as 2 methylation steps. The polypeptide is Non-reducing polyketide synthase pkdA (Emericella nidulans (strain FGSC A4 / ATCC 38163 / CBS 112.46 / NRRL 194 / M139) (Aspergillus nidulans)).